The sequence spans 369 residues: S-(hydroxymethyl)glutathione dehydrogenase (369 aa).

Zn(2+) is bound by residues C40, H62, C92, C95, C98, C106, and C169.

It belongs to the zinc-containing alcohol dehydrogenase family. Class-III subfamily. In terms of assembly, homodimer. Zn(2+) is required as a cofactor.

Its subcellular location is the cytoplasm. The catalysed reaction is S-(hydroxymethyl)glutathione + NADP(+) = S-formylglutathione + NADPH + H(+). It catalyses the reaction S-(hydroxymethyl)glutathione + NAD(+) = S-formylglutathione + NADH + H(+). The enzyme catalyses a primary alcohol + NAD(+) = an aldehyde + NADH + H(+). It carries out the reaction a secondary alcohol + NAD(+) = a ketone + NADH + H(+). The catalysed reaction is S-nitrosoglutathione + NADH + H(+) = S-(hydroxysulfenamide)glutathione + NAD(+). In terms of biological role, has high formaldehyde dehydrogenase activity in the presence of glutathione and catalyzes the oxidation of normal alcohols in a reaction that is not GSH-dependent. In addition, hemithiolacetals other than those formed from GSH, including omega-thiol fatty acids, also are substrates. Also acts as a S-nitroso-glutathione reductase by catalyzing the NADH-dependent reduction of S-nitrosoglutathione. The chain is S-(hydroxymethyl)glutathione dehydrogenase (frmA) from Synechocystis sp. (strain ATCC 27184 / PCC 6803 / Kazusa).